We begin with the raw amino-acid sequence, 515 residues long: Bifunctional purine biosynthesis protein PurH (515 aa).

The MGS-like domain maps to 1–145 (MTKRALISVS…KNHASVTVVV (145 aa)).

It belongs to the PurH family.

It carries out the reaction (6R)-10-formyltetrahydrofolate + 5-amino-1-(5-phospho-beta-D-ribosyl)imidazole-4-carboxamide = 5-formamido-1-(5-phospho-D-ribosyl)imidazole-4-carboxamide + (6S)-5,6,7,8-tetrahydrofolate. The enzyme catalyses IMP + H2O = 5-formamido-1-(5-phospho-D-ribosyl)imidazole-4-carboxamide. Its pathway is purine metabolism; IMP biosynthesis via de novo pathway; 5-formamido-1-(5-phospho-D-ribosyl)imidazole-4-carboxamide from 5-amino-1-(5-phospho-D-ribosyl)imidazole-4-carboxamide (10-formyl THF route): step 1/1. It participates in purine metabolism; IMP biosynthesis via de novo pathway; IMP from 5-formamido-1-(5-phospho-D-ribosyl)imidazole-4-carboxamide: step 1/1. This chain is Bifunctional purine biosynthesis protein PurH, found in Streptococcus suis.